A 1354-amino-acid chain; its full sequence is Eukaryotic translation initiation factor 3 subunit A (1354 aa).

K68 carries the post-translational modification N6-acetyllysine. A coiled-coil region spans residues 82–120 (NIKSLEDVVRAYLKLAEEKTEAAKEESQQMVLDIEDLDN). The PCI domain maps to 315 to 498 (MQRMSTRVLL…RTLSFGSDLN (184 aa)). Phosphoserine occurs at positions 492 and 584. The interaction with EIF3B stretch occupies residues 664 to 835 (LDPDFIMAKQ…REERERAERA (172 aa)). Disordered regions lie at residues 809–844 (EKEE…LREY), 866–1249 (EERE…RDRD), and 1262–1354 (DLRD…TVRR). Basic and acidic residues-rich tracts occupy residues 866–1136 (EERE…DDAR), 1148–1249 (GWRE…RDRD), 1262–1302 (DLRD…DPPR), and 1310–1343 (SRER…TKNE). S895 carries the phosphoserine modification. The stretch at 924 to 931 (DDERPHRR) is one 1; truncated repeat. Positions 924–1143 (DDERPHRRDE…DARPGPWRPF (220 aa)) are 22 X 10 AA approximate tandem repeats of [DA]-[DE]-[ED]-R-[PLIGFSV]-[RPS]-[RW]-[RL]-[GNIHT]-[DGLPTAM]. Residues 932–941 (DEDRLRRLGG) form repeat 2. One copy of the 3; approximate repeat lies at 942–951 (DDEERESSLR). A Phosphoserine modification is found at S949. 18 tandem repeats follow at residues 953 to 962 (DDDRIPRRGL), 963 to 972 (DDDRGPRRGP), 973 to 982 (DEDRFSRRGT), 983 to 992 (DDDRPSWRNA), 993 to 1002 (DDDRPPRRIG), 1003 to 1012 (DDDRGSWRHT), 1013 to 1022 (DDDRPPRRGL), 1023 to 1032 (DDDRPPRRGL), 1033 to 1042 (DDERGSWRTA), 1043 to 1052 (EEDRGPRRGM), 1053 to 1062 (DDDRGPRRGG), 1064 to 1073 (DDERSSWRNA), 1074 to 1083 (DDDRGPRRGM), 1084 to 1093 (DDDRGPRRGL), 1094 to 1103 (DDDRGPWRNA), 1104 to 1113 (AEDRISRRGA), 1114 to 1123 (DDDRGPWRNM), and 1124 to 1133 (DDDRVPRRGD). At S1038 the chain carries Phosphoserine. The 22; approximate repeat unit spans residues 1134-1143 (DARPGPWRPF). S1159 and S1233 each carry phosphoserine. S1310 and S1336 each carry phosphoserine.

The protein belongs to the eIF-3 subunit A family. Component of the eukaryotic translation initiation factor 3 (eIF-3) complex, which is composed of 13 subunits: EIF3A, EIF3B, EIF3C, EIF3D, EIF3E, EIF3F, EIF3G, EIF3H, EIF3I, EIF3J, EIF3K, EIF3L and EIF3M. The eIF-3 complex appears to include 3 stable modules: module A is composed of EIF3A, EIF3B, EIF3G and EIF3I; module B is composed of EIF3F, EIF3H, and EIF3M; and module C is composed of EIF3C, EIF3D, EIF3E, EIF3L and EIF3K. EIF3C of module C binds EIF3B of module A and EIF3H of module B, thereby linking the three modules. EIF3J is a labile subunit that binds to the eIF-3 complex via EIF3B. The eIF-3 complex interacts with RPS6KB1 under conditions of nutrient depletion. Mitogenic stimulation leads to binding and activation of a complex composed of MTOR and RPTOR, leading to phosphorylation and release of RPS6KB1 and binding of EIF4B to eIF-3. Interacts with EIF4G1. Also interacts with KRT7 and PIWIL2. Post-translationally, phosphorylated. Phosphorylation is enhanced upon serum stimulation.

The protein localises to the cytoplasm. Its function is as follows. RNA-binding component of the eukaryotic translation initiation factor 3 (eIF-3) complex, which is required for several steps in the initiation of protein synthesis. The eIF-3 complex associates with the 40S ribosome and facilitates the recruitment of eIF-1, eIF-1A, eIF-2:GTP:methionyl-tRNAi and eIF-5 to form the 43S pre-initiation complex (43S PIC). The eIF-3 complex stimulates mRNA recruitment to the 43S PIC and scanning of the mRNA for AUG recognition. The eIF-3 complex is also required for disassembly and recycling of post-termination ribosomal complexes and subsequently prevents premature joining of the 40S and 60S ribosomal subunits prior to initiation. The eIF-3 complex specifically targets and initiates translation of a subset of mRNAs involved in cell proliferation, including cell cycling, differentiation and apoptosis, and uses different modes of RNA stem-loop binding to exert either translational activation or repression. In Rattus norvegicus (Rat), this protein is Eukaryotic translation initiation factor 3 subunit A (Eif3a).